The following is a 225-amino-acid chain: Peptidyl-tRNA hydrolase (225 aa).

Residue Tyr14 participates in tRNA binding. His19 serves as the catalytic Proton acceptor. Residues Phe64, Asn66, and Asn112 each contribute to the tRNA site. Residues 184–225 (ALRMQPPKPEKPKPAAKAPEAQAPEAAPDARSALQKLADRFR) form a disordered region. The segment covering 198-210 (AAKAPEAQAPEAA) has biased composition (low complexity).

This sequence belongs to the PTH family. Monomer.

It is found in the cytoplasm. It catalyses the reaction an N-acyl-L-alpha-aminoacyl-tRNA + H2O = an N-acyl-L-amino acid + a tRNA + H(+). In terms of biological role, hydrolyzes ribosome-free peptidyl-tRNAs (with 1 or more amino acids incorporated), which drop off the ribosome during protein synthesis, or as a result of ribosome stalling. Functionally, catalyzes the release of premature peptidyl moieties from peptidyl-tRNA molecules trapped in stalled 50S ribosomal subunits, and thus maintains levels of free tRNAs and 50S ribosomes. The sequence is that of Peptidyl-tRNA hydrolase from Cereibacter sphaeroides (strain KD131 / KCTC 12085) (Rhodobacter sphaeroides).